The following is a 387-amino-acid chain: 3-ketoacyl-CoA thiolase (387 aa).

The active-site Acyl-thioester intermediate is C91. Active-site proton acceptor residues include H343 and C373.

It belongs to the thiolase-like superfamily. Thiolase family. In terms of assembly, heterotetramer of two alpha chains (FadB) and two beta chains (FadA).

Its subcellular location is the cytoplasm. It carries out the reaction an acyl-CoA + acetyl-CoA = a 3-oxoacyl-CoA + CoA. It functions in the pathway lipid metabolism; fatty acid beta-oxidation. Catalyzes the final step of fatty acid oxidation in which acetyl-CoA is released and the CoA ester of a fatty acid two carbons shorter is formed. In Shewanella sp. (strain MR-7), this protein is 3-ketoacyl-CoA thiolase.